We begin with the raw amino-acid sequence, 458 residues long: Argininosuccinate lyase (458 aa).

This sequence belongs to the lyase 1 family. Argininosuccinate lyase subfamily.

The protein resides in the cytoplasm. It catalyses the reaction 2-(N(omega)-L-arginino)succinate = fumarate + L-arginine. The protein operates within amino-acid biosynthesis; L-arginine biosynthesis; L-arginine from L-ornithine and carbamoyl phosphate: step 3/3. The sequence is that of Argininosuccinate lyase from Vibrio cholerae serotype O1 (strain ATCC 39541 / Classical Ogawa 395 / O395).